The following is a 331-amino-acid chain: 6-phosphogluconolactonase (331 aa).

The protein belongs to the cycloisomerase 2 family.

It catalyses the reaction 6-phospho-D-glucono-1,5-lactone + H2O = 6-phospho-D-gluconate + H(+). It participates in carbohydrate degradation; pentose phosphate pathway; D-ribulose 5-phosphate from D-glucose 6-phosphate (oxidative stage): step 2/3. Functionally, catalyzes the hydrolysis of 6-phosphogluconolactone to 6-phosphogluconate. The polypeptide is 6-phosphogluconolactonase (Buchnera aphidicola subsp. Baizongia pistaciae (strain Bp)).